A 477-amino-acid chain; its full sequence is Inositol phosphosphingolipids phospholipase C (477 aa).

Residues 1-398 (MYNRKDRDVH…QRQKFFRGLH (398 aa)) are Cytoplasmic-facing. Mg(2+) is bound at residue Glu100. Residue His334 is the Proton acceptor of the active site. Residues 399 to 417 (FWASILLLIASLVVTTFTA) form a helical membrane-spanning segment. At 418 to 424 (NKAGWSS) the chain is on the mitochondrial intermembrane side. The helical transmembrane segment at 425 to 449 (IFWVLFAIAVSISGTIDGAISFLFG) threads the bilayer. Residues 450 to 477 (RSEIRALIEVEQEVLDAEHHLQTFLSEK) lie on the Cytoplasmic side of the membrane.

The protein belongs to the neutral sphingomyelinase family. Mg(2+) serves as cofactor.

The protein resides in the endoplasmic reticulum membrane. It is found in the mitochondrion outer membrane. It catalyses the reaction an N-acyl-(4R)-4-hydroxysphinganine-1-phosphoinositol + H2O = 1D-myo-inositol 1-phosphate + an N-acyl-(4R)-4-hydroxysphinganine + H(+). The catalysed reaction is a mannosylinositol-1-phospho-N-acyl-sphingoid base + H2O = mannosylinositol-1-phosphate + an N-acyl-sphingoid base + H(+). The enzyme catalyses an inositol phosphomannosylinositol-1-phospho-N-acyl-(4R)-4-hydroxysphinganine + H2O = mannosyldiinositol-1-phosphate + an N-acyl-(4R)-4-hydroxysphinganine + H(+). Its pathway is lipid metabolism; sphingolipid metabolism. Its activity is regulated as follows. Activated through localization to mitochondria in specific growth phases. Functionally, responsible for the hydrolysis of the phosphosphingolipids (IPS), inositol phosphorylceramide (IPC), mannosylinositol phosphorylceramide (MIPC), and mannosyldiinositol phosphorylceramide (M(IP)2C). Regulates sphingolipid metabolism in mitochondria, especially the formation of alpha-hydroxylated very long chain phytoceramides. The generated ceramides contribute to the normal function of mitochondria. Also active on sphingomyelin (SM), but this activity is probably not physiologically relevant. The sequence is that of Inositol phosphosphingolipids phospholipase C from Saccharomyces cerevisiae (strain ATCC 204508 / S288c) (Baker's yeast).